A 219-amino-acid chain; its full sequence is Tritrans,polycis-undecaprenyl-diphosphate synthase (geranylgeranyl-diphosphate specific) (219 aa).

Residue Asp12 is part of the active site. Residue Asp12 coordinates Mg(2+). Residues 13-16 (GNRR), Trp17, and 59-61 (SRD) contribute to the substrate site. Asn62 acts as the Proton acceptor in catalysis. Substrate contacts are provided by residues Arg66, Arg168, and 174 to 176 (RLS). Glu187 is a Mg(2+) binding site.

Belongs to the UPP synthase family. As to quaternary structure, homodimer. It depends on Mg(2+) as a cofactor.

The catalysed reaction is geranylgeranyl diphosphate + 7 isopentenyl diphosphate = tri-trans,hepta-cis-undecaprenyl diphosphate + 7 diphosphate. Functionally, catalyzes the sequential condensation of isopentenyl diphosphate (IPP) with geranylgeranyl diphosphate (GGPP) to yield (2Z,6Z,10Z,14Z,18Z,22Z,26Z,30E,34E,38E)-undecaprenyl diphosphate (tritrans,heptacis-UPP). It is probably the precursor of glycosyl carrier lipids. The sequence is that of Tritrans,polycis-undecaprenyl-diphosphate synthase (geranylgeranyl-diphosphate specific) from Aeropyrum pernix (strain ATCC 700893 / DSM 11879 / JCM 9820 / NBRC 100138 / K1).